The primary structure comprises 328 residues: GMP reductase (328 aa).

The active-site Thioimidate intermediate is cysteine 174. 203–226 (IIADGGIRTHGDIAKSIRFGASMV) contacts NADP(+).

Belongs to the IMPDH/GMPR family. GuaC type 2 subfamily.

It carries out the reaction IMP + NH4(+) + NADP(+) = GMP + NADPH + 2 H(+). In terms of biological role, catalyzes the irreversible NADPH-dependent deamination of GMP to IMP. It functions in the conversion of nucleobase, nucleoside and nucleotide derivatives of G to A nucleotides, and in maintaining the intracellular balance of A and G nucleotides. In Staphylococcus saprophyticus subsp. saprophyticus (strain ATCC 15305 / DSM 20229 / NCIMB 8711 / NCTC 7292 / S-41), this protein is GMP reductase.